Here is a 466-residue protein sequence, read N- to C-terminus: Uronate isomerase (466 aa).

It belongs to the metallo-dependent hydrolases superfamily. Uronate isomerase family.

The catalysed reaction is D-glucuronate = D-fructuronate. It carries out the reaction aldehydo-D-galacturonate = keto-D-tagaturonate. Its pathway is carbohydrate metabolism; pentose and glucuronate interconversion. This chain is Uronate isomerase, found in Streptococcus agalactiae serotype III (strain NEM316).